The chain runs to 172 residues: Nicotinamide-nucleotide adenylyltransferase (172 aa).

It belongs to the archaeal NMN adenylyltransferase family.

It localises to the cytoplasm. The catalysed reaction is beta-nicotinamide D-ribonucleotide + ATP + H(+) = diphosphate + NAD(+). The protein operates within cofactor biosynthesis; NAD(+) biosynthesis; NAD(+) from nicotinamide D-ribonucleotide: step 1/1. This Methanococcus vannielii (strain ATCC 35089 / DSM 1224 / JCM 13029 / OCM 148 / SB) protein is Nicotinamide-nucleotide adenylyltransferase.